Reading from the N-terminus, the 209-residue chain is MSIKYIASSKLPTPWGVFEMHGFEDSETGKEHVALTFGTFTPDAPILGRIHSECLTGDALFSLRCDCGFQLQTAMQNIAEEGQGFILYLRQEGRGIGLLNKIRAYELQDQGANTVEANERLGFEADMRKYDMIIPMMEKIGVDKVRLMTNNPRKVKAMQSFGLEVVERVPLQVGKNRYNEGYLKTKSTQLGHMMSEHHFTETDPEVDKD.

49-53 serves as a coordination point for GTP; the sequence is RIHSE. Residues C54, C65, and C67 each coordinate Zn(2+). GTP-binding positions include Q70, 92–94, and T114; that span reads EGR. D126 functions as the Proton acceptor in the catalytic mechanism. R128 serves as the catalytic Nucleophile. GTP is bound by residues T149 and K154.

This sequence belongs to the GTP cyclohydrolase II family. Zn(2+) is required as a cofactor.

The catalysed reaction is GTP + 4 H2O = 2,5-diamino-6-hydroxy-4-(5-phosphoribosylamino)-pyrimidine + formate + 2 phosphate + 3 H(+). It functions in the pathway cofactor biosynthesis; riboflavin biosynthesis; 5-amino-6-(D-ribitylamino)uracil from GTP: step 1/4. Its function is as follows. Catalyzes the conversion of GTP to 2,5-diamino-6-ribosylamino-4(3H)-pyrimidinone 5'-phosphate (DARP), formate and pyrophosphate. In Shewanella pealeana (strain ATCC 700345 / ANG-SQ1), this protein is GTP cyclohydrolase-2.